Reading from the N-terminus, the 665-residue chain is Succinate dehydrogenase [ubiquinone] flavoprotein subunit A, mitochondrial (665 aa).

A mitochondrion-targeting transit peptide spans 1 to 45; that stretch reads MALLKVAPSRLLSRALQLASRVQNCTPTVTTARRNFHFTVYGRKD. Residues Ala72, Ala75, Thr94, Lys95, and Ser101 each coordinate FAD. The residue at position 102 (His102) is a Tele-8alpha-FAD histidine. FAD is bound by residues Thr103, Gly108, Ala224, and Asp278. Positions 299, 343, and 410 each coordinate oxaloacetate. The active-site Proton acceptor is Arg343. Glu443 is a binding site for FAD. 2 residues coordinate oxaloacetate: Arg454 and Ala457. Ser459 and Leu460 together coordinate FAD.

The protein belongs to the FAD-dependent oxidoreductase 2 family. FRD/SDH subfamily. Component of complex II composed of four subunits: a flavoprotein (FP), an iron-sulfur protein (IP), and a cytochrome b composed of a large and a small subunit. FAD is required as a cofactor.

The protein resides in the mitochondrion inner membrane. The enzyme catalyses a ubiquinone + succinate = a ubiquinol + fumarate. The catalysed reaction is (R)-malate + a quinone = enol-oxaloacetate + a quinol. It carries out the reaction (S)-malate + a quinone = enol-oxaloacetate + a quinol. It participates in carbohydrate metabolism; tricarboxylic acid cycle; fumarate from succinate (eukaryal route): step 1/1. Enol-oxaloacetate inhibits the succinate dehydrogenase activity. Its function is as follows. Flavoprotein (FP) subunit of succinate dehydrogenase (SDH) that is involved in complex II of the mitochondrial electron transport chain and is responsible for transferring electrons from succinate to ubiquinone (coenzyme Q). SDH also oxidizes malate to the non-canonical enol form of oxaloacetate, enol-oxaloacetate. Enol-oxaloacetate, which is a potent inhibitor of the succinate dehydrogenase activity, is further isomerized into keto-oxaloacetate. The sequence is that of Succinate dehydrogenase [ubiquinone] flavoprotein subunit A, mitochondrial (sdha-a) from Xenopus laevis (African clawed frog).